A 204-amino-acid polypeptide reads, in one-letter code: Cytochrome bo(3) ubiquinol oxidase subunit 3 (204 aa).

The Cytoplasmic segment spans residues 1–31 (MATDTLTHATAHAHEHGHHDAGGTKIFGFWI). A helical membrane pass occupies residues 32–50 (YLMSDCILFSILFATYAVL). The Periplasmic portion of the chain corresponds to 51-66 (VNGTAGGPTGKDIFEL). Residues 67 to 85 (PFVLVETFLLLFSSITYGM) traverse the membrane as a helical segment. Residues 86 to 101 (AAIAMYKNNKSQVISW) are Cytoplasmic-facing. Residues 102–120 (LALTWLFGAGFIGMEIYEF) traverse the membrane as a helical segment. Residues 121-142 (HHLIVNGMGPDRSGFLSAFFAL) lie on the Periplasmic side of the membrane. A helical transmembrane segment spans residues 143 to 161 (VGTHGLHVTSGLIWMAVLM). Over 162–184 (VQIARRGLTSTNRTRIMCLSLFW) the chain is Cytoplasmic. Residues 185–203 (HFLDVVWICVFTVVYLMGA) form a helical membrane-spanning segment. Residue Met204 is a topological domain, periplasmic.

This sequence belongs to the cytochrome c oxidase subunit 3 family. As to quaternary structure, heterooctamer of two A chains, two B chains, two C chains and two D chains.

Its subcellular location is the cell inner membrane. In terms of biological role, cytochrome bo(3) ubiquinol terminal oxidase is the component of the aerobic respiratory chain of E.coli that predominates when cells are grown at high aeration. Has proton pump activity across the membrane in addition to electron transfer, pumping 2 protons/electron. The sequence is that of Cytochrome bo(3) ubiquinol oxidase subunit 3 (cyoC) from Escherichia coli O6:H1 (strain CFT073 / ATCC 700928 / UPEC).